The chain runs to 617 residues: DNA mismatch repair protein MutL (617 aa).

A disordered region spans residues 363–394 (YAPAYGARPPQPSAWSVDTSPHRPLDDGQNRF). Over residues 382 to 392 (SPHRPLDDGQN) the composition is skewed to basic and acidic residues.

This sequence belongs to the DNA mismatch repair MutL/HexB family.

In terms of biological role, this protein is involved in the repair of mismatches in DNA. It is required for dam-dependent methyl-directed DNA mismatch repair. May act as a 'molecular matchmaker', a protein that promotes the formation of a stable complex between two or more DNA-binding proteins in an ATP-dependent manner without itself being part of a final effector complex. This chain is DNA mismatch repair protein MutL, found in Allorhizobium ampelinum (strain ATCC BAA-846 / DSM 112012 / S4) (Agrobacterium vitis (strain S4)).